Consider the following 338-residue polypeptide: Large ribosomal subunit protein uL3 (338 aa).

The disordered stretch occupies residues 230–253 (HRKGHRRTGTIGPQAPALMFTQPR).

This sequence belongs to the universal ribosomal protein uL3 family. In terms of assembly, part of the 50S ribosomal subunit. Forms a cluster with proteins L14 and L24e.

Functionally, one of the primary rRNA binding proteins, it binds directly near the 3'-end of the 23S rRNA, where it nucleates assembly of the 50S subunit. The protein is Large ribosomal subunit protein uL3 of Pyrobaculum neutrophilum (strain DSM 2338 / JCM 9278 / NBRC 100436 / V24Sta) (Thermoproteus neutrophilus).